Consider the following 880-residue polypeptide: Leucine--tRNA ligase (880 aa).

Residues 46–56 (PYPSGALHMGH) carry the 'HIGH' region motif. A 'KMSKS' region motif is present at residues 638–642 (KMSKS). Lysine 641 is a binding site for ATP.

It belongs to the class-I aminoacyl-tRNA synthetase family.

It localises to the cytoplasm. It catalyses the reaction tRNA(Leu) + L-leucine + ATP = L-leucyl-tRNA(Leu) + AMP + diphosphate. The sequence is that of Leucine--tRNA ligase from Xanthomonas oryzae pv. oryzae (strain KACC10331 / KXO85).